We begin with the raw amino-acid sequence, 642 residues long: Threonine--tRNA ligase (642 aa).

A TGS domain is found at 1-61 (MPVITLPDGS…DTDSELSIIT (61 aa)). Residues 243–534 (DHRKIGKQLD…LIEEYAGKFP (292 aa)) are catalytic. Zn(2+)-binding residues include cysteine 334, histidine 385, and histidine 511.

The protein belongs to the class-II aminoacyl-tRNA synthetase family. As to quaternary structure, homodimer. Zn(2+) is required as a cofactor.

Its subcellular location is the cytoplasm. The catalysed reaction is tRNA(Thr) + L-threonine + ATP = L-threonyl-tRNA(Thr) + AMP + diphosphate + H(+). In terms of biological role, catalyzes the attachment of threonine to tRNA(Thr) in a two-step reaction: L-threonine is first activated by ATP to form Thr-AMP and then transferred to the acceptor end of tRNA(Thr). Also edits incorrectly charged L-seryl-tRNA(Thr). The protein is Threonine--tRNA ligase of Shewanella woodyi (strain ATCC 51908 / MS32).